Reading from the N-terminus, the 1580-residue chain is Transcriptional activator GLI3 (1580 aa).

Position 1 is an N-acetylmethionine (methionine 1). 2 stretches are compositionally biased toward polar residues: residues 1–10 (MEAQSHSSTT) and 58–78 (ITMQ…PSTS). The disordered stretch occupies residues 1–79 (MEAQSHSSTT…KVSEEPSTSS (79 aa)). Arginine 175 is modified (omega-N-methylarginine). A disordered region spans residues 368–475 (QSLGSAFGHS…DKDESKQEPE (108 aa)). Over residues 401 to 427 (NPVQVSSGPSESSQNKPTSESAVSSTG) the composition is skewed to polar residues. Residues lysine 438 and lysine 462 each participate in a glycyl lysine isopeptide (Lys-Gly) (interchain with G-Cter in SUMO2) cross-link. A compositionally biased stretch (basic and acidic residues) spans 461 to 474 (VKEEGDKDESKQEP). 5 C2H2-type zinc fingers span residues 480-505 (TNCH…NNDH), 513-540 (FVCR…MRRH), 546-570 (HKCT…LRSH), 576-601 (YVCE…NRTH), and 607-632 (YVCK…KTVH). Residues 620 to 728 (DPSSLRKHVK…PISNYSNSGL (109 aa)) are disordered. The span at 632-648 (HGPEAHVTKKQRGDIHP) shows a compositional bias: basic and acidic residues. Phosphoserine is present on serine 664. Basic and acidic residues predominate over residues 684-699 (SKREECLQVKTVKAEK). Positions 703 to 726 (SQPSPGGQSSCSSQQSPISNYSNS) are enriched in low complexity. The segment at 745–845 (DETPIMDSTI…VDVTMLNMLN (101 aa)) is mediates interaction with DZIP1. Lysine 773 is covalently cross-linked (Glycyl lysine isopeptide (Lys-Gly) (interchain with G-Cter in ubiquitin)). Lysine 779 participates in a covalent cross-link: Glycyl lysine isopeptide (Lys-Gly) (interchain with G-Cter in SUMO2); alternate. A Glycyl lysine isopeptide (Lys-Gly) (interchain with G-Cter in ubiquitin); alternate cross-link involves residue lysine 779. Glycyl lysine isopeptide (Lys-Gly) (interchain with G-Cter in ubiquitin) cross-links involve residues lysine 784 and lysine 800. Phosphoserine; by PKA is present on residues serine 849, serine 865, serine 877, and serine 907. Low complexity predominate over residues 863–882 (RSSGISPCFSSRRSSEASQA). The disordered stretch occupies residues 863 to 918 (RSSGISPCFSSRRSSEASQAEGRPQNVSVADSYDPISTDASRRSSEASQSDGLPSL). Residues 908–918 (EASQSDGLPSL) are compositionally biased toward polar residues. A phosphoserine; by PKA mark is found at serine 980 and serine 1006. The disordered stretch occupies residues 981–1042 (DGGAHGYGRR…PAMATSAEKR (62 aa)).

It belongs to the GLI C2H2-type zinc-finger protein family. The full-length GLI3 form (GLI3FL) interacts with SUFU and this interaction regulates the formation of either repressor or activator forms of GLI3. Its association with SUFU is regulated by Hh signaling and dissociation of the SUFU-GLI3 interaction requires the presence of the ciliary motor KIF3A. Interacts with KIF7. The activator form of GLI3 (GLI3A) but not the repressor form (GLI3R) can interact with TRPS1. The phosphorylated form interacts with BTRC. Interacts with ZIC1. Interacts with ZIC3 (via C2H2-type domains 3, 4 and 5); the interaction enhances its transcriptional activity. Interacts with WRD11; the interaction associates EMX1 with GLI3. Interacts with DZIP1; retains GLI3 within the cytoplasm. Phosphorylated on multiple sites by protein kinase A (PKA) and phosphorylation by PKA primes further phosphorylation by CK1 and GSK3. Phosphorylated by DYRK2 (in vitro). Phosphorylation is essential for its proteolytic processing. In terms of processing, transcriptional repressor GLI3R, a C-terminally truncated form, is generated from the full-length GLI3 protein (GLI3FL/GLI3-190) through proteolytic processing. This process requires PKA-primed phosphorylation of GLI3, ubiquitination of GLI3 and the presence of BTRC. GLI3FL is complexed with SUFU in the cytoplasm and is maintained in a neutral state. Without the Hh signal, the SUFU-GLI3 complex is recruited to cilia, leading to the efficient processing of GLI3FL into GLI3R. GLI3R formation leads to its dissociation from SUFU, allowing it to translocate into the nucleus, and repress Hh target genes. When Hh signaling is initiated, SUFU dissociates from GLI3FL and this has two consequences. First, GLI3R production is halted. Second, free GLI3FL translocates to the nucleus, where it is phosphorylated, destabilized, and converted to a transcriptional activator (GLI3A). Phosphorylated in vitro by ULK3.

Its subcellular location is the nucleus. It is found in the cytoplasm. The protein localises to the cell projection. It localises to the cilium. Its function is as follows. Has a dual function as a transcriptional activator and a repressor of the sonic hedgehog (Shh) pathway, and plays a role in limb development. The full-length GLI3 form (GLI3FL) after phosphorylation and nuclear translocation, acts as an activator (GLI3A) while GLI3R, its C-terminally truncated form, acts as a repressor. A proper balance between the GLI3 activator and the repressor GLI3R, rather than the repressor gradient itself or the activator/repressor ratio gradient, specifies limb digit number and identity. In concert with TRPS1, plays a role in regulating the size of the zone of distal chondrocytes, in restricting the zone of PTHLH expression in distal cells and in activating chondrocyte proliferation. Binds to the minimal GLI-consensus sequence 5'-GGGTGGTC-3'. Plays a role in limb and brain development. This chain is Transcriptional activator GLI3 (GLI3), found in Pan troglodytes (Chimpanzee).